The sequence spans 97 residues: Aspartyl/glutamyl-tRNA(Asn/Gln) amidotransferase subunit C (97 aa).

The protein belongs to the GatC family. As to quaternary structure, heterotrimer of A, B and C subunits.

The enzyme catalyses L-glutamyl-tRNA(Gln) + L-glutamine + ATP + H2O = L-glutaminyl-tRNA(Gln) + L-glutamate + ADP + phosphate + H(+). It carries out the reaction L-aspartyl-tRNA(Asn) + L-glutamine + ATP + H2O = L-asparaginyl-tRNA(Asn) + L-glutamate + ADP + phosphate + 2 H(+). Allows the formation of correctly charged Asn-tRNA(Asn) or Gln-tRNA(Gln) through the transamidation of misacylated Asp-tRNA(Asn) or Glu-tRNA(Gln) in organisms which lack either or both of asparaginyl-tRNA or glutaminyl-tRNA synthetases. The reaction takes place in the presence of glutamine and ATP through an activated phospho-Asp-tRNA(Asn) or phospho-Glu-tRNA(Gln). The polypeptide is Aspartyl/glutamyl-tRNA(Asn/Gln) amidotransferase subunit C (Prochlorococcus marinus (strain SARG / CCMP1375 / SS120)).